The sequence spans 380 residues: Cytochrome b (380 aa).

4 consecutive transmembrane segments (helical) span residues 34–54 (FGSLLGICLMTQILTGLLLAM), 78–99 (WLIRNLHANGASLFFICIYLHI), 114–134 (WNTGVILLLTLMATAFVGYVL), and 179–199 (FFALHFLLPFIIAGLTLIHLT). Residues His84 and His98 each coordinate heme b. 2 residues coordinate heme b: His183 and His197. Position 202 (His202) interacts with a ubiquinone. The next 4 membrane-spanning stretches (helical) occupy residues 227–247 (TKDILGFIILLLPLMTLAMFA), 289–309 (LGGVLALAASVLVLFLAPFLH), 321–341 (LSQLLFWTLVANLFILTWIGS), and 348–368 (FIITGQLASLTYFTILLILFP).

Belongs to the cytochrome b family. In terms of assembly, the cytochrome bc1 complex contains 11 subunits: 3 respiratory subunits (MT-CYB, CYC1 and UQCRFS1), 2 core proteins (UQCRC1 and UQCRC2) and 6 low-molecular weight proteins (UQCRH/QCR6, UQCRB/QCR7, UQCRQ/QCR8, UQCR10/QCR9, UQCR11/QCR10 and a cleavage product of UQCRFS1). This cytochrome bc1 complex then forms a dimer. Heme b is required as a cofactor.

It is found in the mitochondrion inner membrane. In terms of biological role, component of the ubiquinol-cytochrome c reductase complex (complex III or cytochrome b-c1 complex) that is part of the mitochondrial respiratory chain. The b-c1 complex mediates electron transfer from ubiquinol to cytochrome c. Contributes to the generation of a proton gradient across the mitochondrial membrane that is then used for ATP synthesis. This is Cytochrome b (MT-CYB) from Aphanotriccus audax (Black-billed flycatcher).